A 473-amino-acid chain; its full sequence is Siroheme synthase (473 aa).

Positions 1 to 203 (MTLFPIFADL…QQPGLAEQEL (203 aa)) are precorrin-2 dehydrogenase /sirohydrochlorin ferrochelatase. Residues 22–23 (AV) and 43–44 (PR) each bind NAD(+). Ser128 carries the phosphoserine modification. A uroporphyrinogen-III C-methyltransferase region spans residues 216–473 (GSVVLVGAGP…GLPGPQALAA (258 aa)). Residue Pro225 coordinates S-adenosyl-L-methionine. Catalysis depends on Asp248, which acts as the Proton acceptor. Lys270 (proton donor) is an active-site residue. Residues 302 to 304 (GGD), Ile307, 332 to 333 (TA), Met384, and Gly413 each bind S-adenosyl-L-methionine.

This sequence in the N-terminal section; belongs to the precorrin-2 dehydrogenase / sirohydrochlorin ferrochelatase family. It in the C-terminal section; belongs to the precorrin methyltransferase family.

It carries out the reaction uroporphyrinogen III + 2 S-adenosyl-L-methionine = precorrin-2 + 2 S-adenosyl-L-homocysteine + H(+). It catalyses the reaction precorrin-2 + NAD(+) = sirohydrochlorin + NADH + 2 H(+). The catalysed reaction is siroheme + 2 H(+) = sirohydrochlorin + Fe(2+). It participates in cofactor biosynthesis; adenosylcobalamin biosynthesis; precorrin-2 from uroporphyrinogen III: step 1/1. The protein operates within cofactor biosynthesis; adenosylcobalamin biosynthesis; sirohydrochlorin from precorrin-2: step 1/1. Its pathway is porphyrin-containing compound metabolism; siroheme biosynthesis; precorrin-2 from uroporphyrinogen III: step 1/1. It functions in the pathway porphyrin-containing compound metabolism; siroheme biosynthesis; siroheme from sirohydrochlorin: step 1/1. It participates in porphyrin-containing compound metabolism; siroheme biosynthesis; sirohydrochlorin from precorrin-2: step 1/1. In terms of biological role, multifunctional enzyme that catalyzes the SAM-dependent methylations of uroporphyrinogen III at position C-2 and C-7 to form precorrin-2 via precorrin-1. Then it catalyzes the NAD-dependent ring dehydrogenation of precorrin-2 to yield sirohydrochlorin. Finally, it catalyzes the ferrochelation of sirohydrochlorin to yield siroheme. This is Siroheme synthase from Bordetella pertussis (strain Tohama I / ATCC BAA-589 / NCTC 13251).